A 146-amino-acid polypeptide reads, in one-letter code: Transcriptional regulator MraZ (146 aa).

SpoVT-AbrB domains follow at residues 9 to 55 (TSAL…PRPV) and 81 to 124 (AMDV…DAQR).

Belongs to the MraZ family. In terms of assembly, forms oligomers.

It localises to the cytoplasm. Its subcellular location is the nucleoid. The sequence is that of Transcriptional regulator MraZ from Leptothrix cholodnii (strain ATCC 51168 / LMG 8142 / SP-6) (Leptothrix discophora (strain SP-6)).